Reading from the N-terminus, the 369-residue chain is 3 beta-hydroxysteroid dehydrogenase type 7 (369 aa).

Tyr159 functions as the Proton acceptor in the catalytic mechanism. Lys163 lines the NAD(+) pocket. 2 helical membrane-spanning segments follow: residues 289-309 and 312-334; these read LLPYWLLVLLATLNALLQWLL and LVLYTPLLNPYTLAMANTTFTVS.

This sequence belongs to the 3-beta-HSD family. As to expression, predominantly expressed in liver.

It localises to the endoplasmic reticulum membrane. It catalyses the reaction 7alpha-hydroxycholesterol + NAD(+) = 7alpha-hydroxycholest-4-en-3-one + NADH + H(+). The enzyme catalyses 7alpha,25-dihydroxycholesterol + NAD(+) = 7alpha,25-dihydroxy-4-cholesten-3-one + NADH + H(+). It carries out the reaction (25R)-cholest-5-en-3beta,7alpha,26-triol + NAD(+) = (25R)-7alpha,26-dihydroxycholest-4-en-3-one + NADH + H(+). The catalysed reaction is (24S)-7alpha-dihydroxycholesterol + NAD(+) = (24S)-7alpha,24-dihydroxycholest-4-en-3-one + NADH + H(+). Its pathway is lipid metabolism; steroid biosynthesis. Functionally, the 3-beta-HSD enzymatic system plays a crucial role in the biosynthesis of all classes of hormonal steroids. HSD VII is active against four 7-alpha-hydroxylated sterols. Does not metabolize several different C(19/21) steroids as substrates. Involved in bile acid synthesis. Plays a key role in cell positioning and movement in lymphoid tissues by mediating degradation of 7-alpha,25-dihydroxycholesterol (7-alpha,25-OHC): 7-alpha,25-OHC acts as a ligand for the G protein-coupled receptor GPR183/EBI2, a chemotactic receptor for a number of lymphoid cells. The sequence is that of 3 beta-hydroxysteroid dehydrogenase type 7 from Mus musculus (Mouse).